The primary structure comprises 26 residues: MMISTFHDGQLRFSNVYRLTLMIFRL.

This is an uncharacterized protein from Saccharomyces cerevisiae (strain ATCC 204508 / S288c) (Baker's yeast).